Here is an 889-residue protein sequence, read N- to C-terminus: Cytoplasmic aconitate hydratase (889 aa).

Residues Q86 and 205 to 207 each bind substrate; that span reads DSH. 3 residues coordinate [4Fe-4S] cluster: C437, C503, and C506. Substrate contacts are provided by residues R536, R541, R699, and 779–780; that span reads SR.

Belongs to the aconitase/IPM isomerase family. Requires [4Fe-4S] cluster as cofactor.

The protein localises to the cytoplasm. The protein resides in the cytosol. It catalyses the reaction citrate = D-threo-isocitrate. In terms of biological role, bifunctional iron sensor that switches between 2 activities depending on iron availability. Iron deprivation, promotes its mRNA binding activity through which it regulates the expression of genes involved in iron uptake, sequestration and utilization. Binds to iron-responsive elements (IRES) in the untranslated region of target mRNAs preventing for instance the translation of ferritin and aminolevulinic acid synthase and stabilizing the transferrin receptor mRNA. Its function is as follows. Conversely, when cellular iron levels are high, binds a 4Fe-4S cluster which precludes RNA binding activity and promotes the aconitase activity, the isomerization of citrate to isocitrate via cis-aconitate. The protein is Cytoplasmic aconitate hydratase (ACO1) of Gallus gallus (Chicken).